Reading from the N-terminus, the 161-residue chain is Regulator of ribonuclease activity A (161 aa).

This sequence belongs to the RraA family. Homotrimer. Binds to both RNA-binding sites in the C-terminal region of Rne and to RhlB.

The protein localises to the cytoplasm. In terms of biological role, globally modulates RNA abundance by binding to RNase E (Rne) and regulating its endonucleolytic activity. Can modulate Rne action in a substrate-dependent manner by altering the composition of the degradosome. Modulates RNA-binding and helicase activities of the degradosome. The protein is Regulator of ribonuclease activity A of Shewanella sediminis (strain HAW-EB3).